A 302-amino-acid chain; its full sequence is 33 kDa chaperonin (302 aa).

Disulfide bonds link C234–C236 and C267–C270.

Belongs to the HSP33 family. In terms of processing, under oxidizing conditions two disulfide bonds are formed involving the reactive cysteines. Under reducing conditions zinc is bound to the reactive cysteines and the protein is inactive.

It is found in the cytoplasm. Functionally, redox regulated molecular chaperone. Protects both thermally unfolding and oxidatively damaged proteins from irreversible aggregation. Plays an important role in the bacterial defense system toward oxidative stress. In Neisseria meningitidis serogroup B (strain ATCC BAA-335 / MC58), this protein is 33 kDa chaperonin.